Consider the following 317-residue polypeptide: Ribosomal RNA small subunit methyltransferase H (317 aa).

S-adenosyl-L-methionine contacts are provided by residues 39-41, D59, F83, D104, and Q111; that span reads GGH.

It belongs to the methyltransferase superfamily. RsmH family.

The protein localises to the cytoplasm. The catalysed reaction is cytidine(1402) in 16S rRNA + S-adenosyl-L-methionine = N(4)-methylcytidine(1402) in 16S rRNA + S-adenosyl-L-homocysteine + H(+). Its function is as follows. Specifically methylates the N4 position of cytidine in position 1402 (C1402) of 16S rRNA. In Paraburkholderia xenovorans (strain LB400), this protein is Ribosomal RNA small subunit methyltransferase H.